Consider the following 306-residue polypeptide: UDP-N-acetylenolpyruvoylglucosamine reductase (306 aa).

An FAD-binding PCMH-type domain is found at 34 to 199 (RVGGPAQLLF…TSVRLRGAIA (166 aa)). The active site involves Arg179. The active-site Proton donor is Ser228. Residue Glu298 is part of the active site.

Belongs to the MurB family. FAD is required as a cofactor.

It is found in the cytoplasm. It catalyses the reaction UDP-N-acetyl-alpha-D-muramate + NADP(+) = UDP-N-acetyl-3-O-(1-carboxyvinyl)-alpha-D-glucosamine + NADPH + H(+). The protein operates within cell wall biogenesis; peptidoglycan biosynthesis. Its function is as follows. Cell wall formation. The polypeptide is UDP-N-acetylenolpyruvoylglucosamine reductase (Rhodopseudomonas palustris (strain BisA53)).